Here is a 246-residue protein sequence, read N- to C-terminus: tRNA (guanine-N(1)-)-methyltransferase (246 aa).

S-adenosyl-L-methionine contacts are provided by residues G112 and 131–136; that span reads IGDYVL.

The protein belongs to the RNA methyltransferase TrmD family. In terms of assembly, homodimer.

The protein localises to the cytoplasm. The catalysed reaction is guanosine(37) in tRNA + S-adenosyl-L-methionine = N(1)-methylguanosine(37) in tRNA + S-adenosyl-L-homocysteine + H(+). Specifically methylates guanosine-37 in various tRNAs. The sequence is that of tRNA (guanine-N(1)-)-methyltransferase from Thermosipho melanesiensis (strain DSM 12029 / CIP 104789 / BI429).